The following is a 461-amino-acid chain: Glycine--tRNA ligase (461 aa).

Substrate contacts are provided by Arg-100 and Glu-174. Residues 206–208 (RNE), 216–221 (FRTREF), 290–291 (EL), and 334–337 (GVDR) contribute to the ATP site. 221–225 (FEQME) contacts substrate. 330–334 (EPSVG) is a substrate binding site.

Belongs to the class-II aminoacyl-tRNA synthetase family. In terms of assembly, homodimer.

The protein resides in the cytoplasm. It catalyses the reaction tRNA(Gly) + glycine + ATP = glycyl-tRNA(Gly) + AMP + diphosphate. Its function is as follows. Catalyzes the attachment of glycine to tRNA(Gly). This Caldanaerobacter subterraneus subsp. tengcongensis (strain DSM 15242 / JCM 11007 / NBRC 100824 / MB4) (Thermoanaerobacter tengcongensis) protein is Glycine--tRNA ligase.